The sequence spans 110 residues: DNA-directed RNA polymerase subunit omega (110 aa).

This sequence belongs to the RNA polymerase subunit omega family. In terms of assembly, the RNAP catalytic core consists of 2 alpha, 1 beta, 1 beta' and 1 omega subunit. When a sigma factor is associated with the core the holoenzyme is formed, which can initiate transcription.

It carries out the reaction RNA(n) + a ribonucleoside 5'-triphosphate = RNA(n+1) + diphosphate. Promotes RNA polymerase assembly. Latches the N- and C-terminal regions of the beta' subunit thereby facilitating its interaction with the beta and alpha subunits. This chain is DNA-directed RNA polymerase subunit omega, found in Nocardioides sp. (strain ATCC BAA-499 / JS614).